An 81-amino-acid chain; its full sequence is ATP synthase subunit c, chloroplastic (81 aa).

Helical transmembrane passes span 3–23 (PLISAASVIAAGLAVGLASIG) and 57–77 (LAFMEALSIYGLVVALALLFA).

The protein belongs to the ATPase C chain family. In terms of assembly, F-type ATPases have 2 components, F(1) - the catalytic core - and F(0) - the membrane proton channel. F(1) has five subunits: alpha(3), beta(3), gamma(1), delta(1), epsilon(1). F(0) has four main subunits: a(1), b(1), b'(1) and c(10-14). The alpha and beta chains form an alternating ring which encloses part of the gamma chain. F(1) is attached to F(0) by a central stalk formed by the gamma and epsilon chains, while a peripheral stalk is formed by the delta, b and b' chains.

Its subcellular location is the plastid. It is found in the chloroplast thylakoid membrane. In terms of biological role, f(1)F(0) ATP synthase produces ATP from ADP in the presence of a proton or sodium gradient. F-type ATPases consist of two structural domains, F(1) containing the extramembraneous catalytic core and F(0) containing the membrane proton channel, linked together by a central stalk and a peripheral stalk. During catalysis, ATP synthesis in the catalytic domain of F(1) is coupled via a rotary mechanism of the central stalk subunits to proton translocation. Key component of the F(0) channel; it plays a direct role in translocation across the membrane. A homomeric c-ring of between 10-14 subunits forms the central stalk rotor element with the F(1) delta and epsilon subunits. The protein is ATP synthase subunit c, chloroplastic of Gossypium barbadense (Sea Island cotton).